Consider the following 314-residue polypeptide: Acetaldehyde dehydrogenase 2 (314 aa).

11 to 14 (SGNI) provides a ligand contact to NAD(+). The active-site Acyl-thioester intermediate is Cys-129. Residues 160-168 (SAGPGTRAN) and Asn-291 contribute to the NAD(+) site.

It belongs to the acetaldehyde dehydrogenase family.

The catalysed reaction is acetaldehyde + NAD(+) + CoA = acetyl-CoA + NADH + H(+). This is Acetaldehyde dehydrogenase 2 from Rhodococcus erythropolis (strain PR4 / NBRC 100887).